Reading from the N-terminus, the 217-residue chain is Thiamine-phosphate synthase (217 aa).

4-amino-2-methyl-5-(diphosphooxymethyl)pyrimidine is bound by residues 45-49 (QFRQK) and Asn81. Asp82 and Asp101 together coordinate Mg(2+). Ser120 provides a ligand contact to 4-amino-2-methyl-5-(diphosphooxymethyl)pyrimidine. A 2-[(2R,5Z)-2-carboxy-4-methylthiazol-5(2H)-ylidene]ethyl phosphate-binding site is contributed by 147–149 (TPS). Lys150 contacts 4-amino-2-methyl-5-(diphosphooxymethyl)pyrimidine. 2-[(2R,5Z)-2-carboxy-4-methylthiazol-5(2H)-ylidene]ethyl phosphate-binding positions include Gly179 and 197-198 (IS).

Belongs to the thiamine-phosphate synthase family. Mg(2+) is required as a cofactor.

The catalysed reaction is 2-[(2R,5Z)-2-carboxy-4-methylthiazol-5(2H)-ylidene]ethyl phosphate + 4-amino-2-methyl-5-(diphosphooxymethyl)pyrimidine + 2 H(+) = thiamine phosphate + CO2 + diphosphate. It carries out the reaction 2-(2-carboxy-4-methylthiazol-5-yl)ethyl phosphate + 4-amino-2-methyl-5-(diphosphooxymethyl)pyrimidine + 2 H(+) = thiamine phosphate + CO2 + diphosphate. The enzyme catalyses 4-methyl-5-(2-phosphooxyethyl)-thiazole + 4-amino-2-methyl-5-(diphosphooxymethyl)pyrimidine + H(+) = thiamine phosphate + diphosphate. It functions in the pathway cofactor biosynthesis; thiamine diphosphate biosynthesis; thiamine phosphate from 4-amino-2-methyl-5-diphosphomethylpyrimidine and 4-methyl-5-(2-phosphoethyl)-thiazole: step 1/1. Condenses 4-methyl-5-(beta-hydroxyethyl)thiazole monophosphate (THZ-P) and 2-methyl-4-amino-5-hydroxymethyl pyrimidine pyrophosphate (HMP-PP) to form thiamine monophosphate (TMP). The chain is Thiamine-phosphate synthase from Helicobacter pylori (strain J99 / ATCC 700824) (Campylobacter pylori J99).